The following is a 336-amino-acid chain: Homoserine dehydrogenase (336 aa).

Phenylalanine 8 lines the NADPH pocket. Positions 10, 11, and 94 each coordinate NAD(+). 3 residues coordinate NADPH: isoleucine 11, threonine 94, and lysine 123. 3 residues coordinate NADP(+): isoleucine 11, threonine 94, and lysine 123. Glutamate 147, valine 150, and glycine 152 together coordinate Na(+). Positions 205 and 208 each coordinate NADP(+). The L-homoserine site is built by glutamate 208 and aspartate 219. Residue lysine 223 is the Proton donor of the active site. Glycine 315 is a binding site for NADPH. Residue glycine 315 coordinates NAD(+). NADP(+) is bound at residue glycine 315.

It belongs to the homoserine dehydrogenase family. A metal cation is required as a cofactor.

The enzyme catalyses L-homoserine + NADP(+) = L-aspartate 4-semialdehyde + NADPH + H(+). The catalysed reaction is L-homoserine + NAD(+) = L-aspartate 4-semialdehyde + NADH + H(+). The protein operates within amino-acid biosynthesis; L-methionine biosynthesis via de novo pathway; L-homoserine from L-aspartate: step 3/3. It functions in the pathway amino-acid biosynthesis; L-threonine biosynthesis; L-threonine from L-aspartate: step 3/5. Catalyzes the conversion of L-aspartate-beta-semialdehyde (L-Asa) to L-homoserine (L-Hse), the third step in the biosynthesis of threonine and methionine from aspartate. The protein is Homoserine dehydrogenase (hom) of Methanocaldococcus jannaschii (strain ATCC 43067 / DSM 2661 / JAL-1 / JCM 10045 / NBRC 100440) (Methanococcus jannaschii).